The sequence spans 239 residues: LexA repressor (239 aa).

A disordered region spans residues 1-40 (MTEAATGPEGADPSRAARSLPGRPPGIRADSSGLTDRQRR). A DNA-binding region (H-T-H motif) is located at residues 58–78 (MREIGQAVGLSSTSSVAHQLM). Basic and acidic residues predominate over residues 89–100 (DPHRPRAYEVRG). Positions 89–116 (DPHRPRAYEVRGSDQPSAQPADTSGKPA) are disordered. Catalysis depends on for autocatalytic cleavage activity residues Ser-163 and Lys-200.

Belongs to the peptidase S24 family. In terms of assembly, homodimer.

It carries out the reaction Hydrolysis of Ala-|-Gly bond in repressor LexA.. Represses a number of genes involved in the response to DNA damage (SOS response), including recA and lexA. In the presence of single-stranded DNA, RecA interacts with LexA causing an autocatalytic cleavage which disrupts the DNA-binding part of LexA, leading to derepression of the SOS regulon and eventually DNA repair. The protein is LexA repressor of Streptomyces clavuligerus.